Here is a 209-residue protein sequence, read N- to C-terminus: MILKKRSKSSKNWLKRNFNDPYIKERNKKKLRSRSWFKLKEIDESEKIFKKGMNVIDLGSNPGGWSEYTLKKIGKSGKIFACDILPMRFLKDIVFFCGDISNSDFLKKIFLFLDKYSWNVVMSDISPNICGYSVIDNSNMFKLSNIVLKISRHVLSNNGYLIIKLFQGYGFNKYMKKIRNIFELVKIYKPNASRVNSREVFIIAYGCKK.

S-adenosyl-L-methionine is bound by residues glycine 63, tryptophan 65, aspartate 83, aspartate 99, and aspartate 124. The active-site Proton acceptor is the lysine 164.

The protein belongs to the class I-like SAM-binding methyltransferase superfamily. RNA methyltransferase RlmE family.

It is found in the cytoplasm. The enzyme catalyses uridine(2552) in 23S rRNA + S-adenosyl-L-methionine = 2'-O-methyluridine(2552) in 23S rRNA + S-adenosyl-L-homocysteine + H(+). Functionally, specifically methylates the uridine in position 2552 of 23S rRNA at the 2'-O position of the ribose in the fully assembled 50S ribosomal subunit. The sequence is that of Ribosomal RNA large subunit methyltransferase E from Buchnera aphidicola subsp. Cinara cedri (strain Cc).